The following is a 396-amino-acid chain: Elongation factor Tu (396 aa).

Residues 10–206 enclose the tr-type G domain; it reads KPHCNIGTIG…NVDEYIPQPE (197 aa). Residues 19–26 are G1; sequence GHVDHGKT. GTP is bound at residue 19–26; that stretch reads GHVDHGKT. Thr26 is a binding site for Mg(2+). The G2 stretch occupies residues 60-64; the sequence is GITIS. The G3 stretch occupies residues 81–84; that stretch reads DCPG. GTP contacts are provided by residues 81-85 and 136-139; these read DCPGH and NKCD. Residues 136–139 are G4; sequence NKCD. The G5 stretch occupies residues 174–176; that stretch reads SAL.

This sequence belongs to the TRAFAC class translation factor GTPase superfamily. Classic translation factor GTPase family. EF-Tu/EF-1A subfamily. As to quaternary structure, monomer.

It localises to the cytoplasm. The enzyme catalyses GTP + H2O = GDP + phosphate + H(+). In terms of biological role, GTP hydrolase that promotes the GTP-dependent binding of aminoacyl-tRNA to the A-site of ribosomes during protein biosynthesis. This Afipia carboxidovorans (strain ATCC 49405 / DSM 1227 / KCTC 32145 / OM5) (Oligotropha carboxidovorans) protein is Elongation factor Tu.